A 134-amino-acid chain; its full sequence is Replication enhancer protein (134 aa).

The protein belongs to the geminiviridae replication enhancer protein family. As to quaternary structure, homooligomer. Interacts with the replication-associated protein (REP). Interacts with host proliferating cell nuclear antigen (PCNA). Interacts with host retinoblastoma-related protein 1 (RBR1), and may thereby deregulate the host cell cycle. Oligomerization and interaction with PCNA are necessary for optimal replication enhancement.

Functionally, increases viral DNA accumulation. Enhances infectivity and symptom expression. This chain is Replication enhancer protein, found in African cassava mosaic virus (isolate West Kenyan 844) (ACMV).